A 98-amino-acid polypeptide reads, in one-letter code: MPFIYINVLLAYFMSLLGLLIYRSHLMSSLLCLEGMMLSLFIMATLMTLNMHLTLMYMMPIVLLVFAACEAAVGLALLVLISNLYGLDYVQNLNLLQC.

3 consecutive transmembrane segments (helical) span residues 1-21, 29-49, and 61-81; these read MPFIYINVLLAYFMSLLGLLI, SLLCLEGMMLSLFIMATLMTL, and IVLLVFAACEAAVGLALLVLI.

The protein belongs to the complex I subunit 4L family. Core subunit of respiratory chain NADH dehydrogenase (Complex I) which is composed of 45 different subunits.

It localises to the mitochondrion inner membrane. The catalysed reaction is a ubiquinone + NADH + 5 H(+)(in) = a ubiquinol + NAD(+) + 4 H(+)(out). In terms of biological role, core subunit of the mitochondrial membrane respiratory chain NADH dehydrogenase (Complex I) which catalyzes electron transfer from NADH through the respiratory chain, using ubiquinone as an electron acceptor. Part of the enzyme membrane arm which is embedded in the lipid bilayer and involved in proton translocation. The protein is NADH-ubiquinone oxidoreductase chain 4L (MT-ND4L) of Aotus trivirgatus (Three-striped night monkey).